We begin with the raw amino-acid sequence, 288 residues long: Energy-coupling factor transporter ATP-binding protein EcfA2 (288 aa).

In terms of domain architecture, ABC transporter spans isoleucine 3–serine 246. Glycine 40–serine 47 serves as a coordination point for ATP.

Belongs to the ABC transporter superfamily. Energy-coupling factor EcfA family. Forms a stable energy-coupling factor (ECF) transporter complex composed of 2 membrane-embedded substrate-binding proteins (S component), 2 ATP-binding proteins (A component) and 2 transmembrane proteins (T component).

It is found in the cell membrane. Its function is as follows. ATP-binding (A) component of a common energy-coupling factor (ECF) ABC-transporter complex. Unlike classic ABC transporters this ECF transporter provides the energy necessary to transport a number of different substrates. The protein is Energy-coupling factor transporter ATP-binding protein EcfA2 of Listeria welshimeri serovar 6b (strain ATCC 35897 / DSM 20650 / CCUG 15529 / CIP 8149 / NCTC 11857 / SLCC 5334 / V8).